A 986-amino-acid polypeptide reads, in one-letter code: E3 ubiquitin-protein ligase Arkadia (986 aa).

Residues Lys-19, Lys-28, Lys-34, Lys-47, Lys-59, Lys-73, Lys-87, Lys-96, and Lys-110 each participate in a glycyl lysine isopeptide (Lys-Gly) (interchain with G-Cter in SUMO2) cross-link. A compositionally biased stretch (basic and acidic residues) spans 66–89 (HLCDDSQKQEKDMNGNQQEQEKSL). The tract at residues 66–106 (HLCDDSQKQEKDMNGNQQEQEKSLVVRKKRKSQQAGPSYVQ) is disordered. Residues 120–191 (QHLGTPSDED…HKWPRTETES (72 aa)) are disordered. Low complexity predominate over residues 132–151 (SSFSDCLSSPSSSLHFGDSD). Residues 164-173 (RHSQTILNAK) are compositionally biased toward polar residues. Lys-173 participates in a covalent cross-link: Glycyl lysine isopeptide (Lys-Gly) (interchain with G-Cter in SUMO2). Over residues 174–184 (SRSHSARSHKW) the composition is skewed to basic residues. Glycyl lysine isopeptide (Lys-Gly) (interchain with G-Cter in SUMO2) cross-links involve residues Lys-198 and Lys-218. The segment at 241 to 404 (VLARRKYALL…VPTTSARMES (164 aa)) is interaction with AXIN1. The segment at 248–277 (ALLPSSSSSSENDLSSESSSSSSTEGEEDL) is disordered. Over residues 252 to 271 (SSSSSSENDLSSESSSSSST) the composition is skewed to low complexity. An SUMO interaction motif 1 (SIM) motif is present at residues 300 to 304 (VVVIE). The short motif at 325-331 (EVEIVTV) is the SUMO interaction motif 2 (SIM) element. Residues 337–373 (SRSTLGHSRSHWSQGSSSHASRPQEPRNRSRISTVIQ) are disordered. The segment covering 347–357 (HWSQGSSSHAS) has biased composition (low complexity). An SUMO interaction motif 3 (SIM) motif is present at residues 382–386 (VVDLT). Disordered stretches follow at residues 389–471 (EDEP…ETGP), 506–561 (QQHG…SYHE), 610–646 (APSQ…RHYM), 659–684 (HQAS…VDYV), and 696–719 (ISSH…TAAP). Positions 395 to 466 (VPTTSARMES…DSRRTTSSAV (72 aa)) are enriched in polar residues. Over residues 508–522 (HGHHFQHHHHHHHTP) the composition is skewed to basic residues. Positions 551–561 (ANSSSGTSYHE) are enriched in polar residues. Positions 670–680 (NPPPQTQPPPQ) are enriched in pro residues. Residues 907–909 (YPH) are ubiquitin binding. Residues Lys-915 and Lys-919 each participate in a glycyl lysine isopeptide (Lys-Gly) (interchain with G-Cter in SUMO2) cross-link. 2 residues coordinate Zn(2+): Cys-934 and Cys-937. The RING-type; atypical zinc-finger motif lies at 934–975 (CTICLSILEEGEDVRRLPCMHLFHQVCVDQWLITNKKCPICR). Positions 949–953 (RLPCM) are ubiquitin binding. Residues His-957 and Cys-960 each contribute to the Zn(2+) site.

This sequence belongs to the Arkadia family. As to quaternary structure, monomer. Interacts with SMAD6, SMAD7, AXIN1, AXIN2 and SKIL isoform SNON. Interacts with (phosphorylated) SMAD2 and SMAD3. Part of a complex containing RNF111, AXIN1 and SMAD7. Interacts (via SIM domains) with SUMO1 and SUMO2.

The protein resides in the nucleus. It is found in the cytoplasm. It localises to the PML body. It carries out the reaction S-ubiquitinyl-[E2 ubiquitin-conjugating enzyme]-L-cysteine + [acceptor protein]-L-lysine = [E2 ubiquitin-conjugating enzyme]-L-cysteine + N(6)-ubiquitinyl-[acceptor protein]-L-lysine.. The protein operates within protein modification; protein ubiquitination. Binds free ubiquitin non-covalently via its RING-type zinc finger. Ubiquitin-binding leads to enhance the E3 ubiquitin-protein ligase activity by stabilizing the ubiquitin-conjugating enzyme E2 (donor ubiquitin) in the 'closed' conformation and activating ubiquitin transfer. Its function is as follows. E3 ubiquitin-protein ligase. Required for mesoderm patterning during embryonic development. Acts as an enhancer of the transcriptional responses of the SMAD2/SMAD3 effectors, which are activated downstream of BMP. Acts by mediating ubiquitination and degradation of SMAD inhibitors such as SMAD7, inducing their proteasomal degradation and thereby enhancing the transcriptional activity of TGF-beta and BMP. In addition to enhance transcription of SMAD2/SMAD3 effectors, also regulates their turnover by mediating their ubiquitination and subsequent degradation, coupling their activation with degradation, thereby ensuring that only effectors 'in use' are degraded. Activates SMAD3/SMAD4-dependent transcription by triggering signal-induced degradation of SNON isoform of SKIL. Associates with UBE2D2 as an E2 enzyme. Specifically binds polysumoylated chains via SUMO interaction motifs (SIMs) and mediates ubiquitination of sumoylated substrates. Catalyzes 'Lys-63'-linked ubiquitination of sumoylated XPC in response to UV irradiation, promoting nucleotide excision repair. Mediates ubiquitination and degradation of sumoylated PML. The regulation of the BMP-SMAD signaling is however independent of sumoylation and is not dependent of SUMO interaction motifs (SIMs). The polypeptide is E3 ubiquitin-protein ligase Arkadia (RNF111) (Pongo abelii (Sumatran orangutan)).